A 229-amino-acid chain; its full sequence is MKLSFHGQSTIYFEANGKKVIVDPFITGNGQSDLDASTLKVDYIILTHGHGDHFGDTIELANRNHATVIGSAELGDYLTTYHNVENVRPMNIGGKAEFDFGNVKFVQAFHSSSLTDENGVPVYLGMPMGLILEIEGKTIYHTGDTGLFSDMKLIADRHPVDVCFIPIGDNFTMGIDDASYAINSFIKPKISVPIHYDTFELIEQDPNKFKQAVSVGEVQILKPGEDVSF.

Belongs to the UPF0173 family.

The chain is UPF0173 metal-dependent hydrolase SSP1060 from Staphylococcus saprophyticus subsp. saprophyticus (strain ATCC 15305 / DSM 20229 / NCIMB 8711 / NCTC 7292 / S-41).